A 943-amino-acid chain; its full sequence is U3 small nucleolar RNA-associated protein 12 (943 aa).

WD repeat units lie at residues 77 to 107 (AKPA…KVWD), 119 to 149 (GHKA…IVWD), 161 to 190 (SHKD…KLWD), 202 to 230 (AHTG…KIWK), 389 to 418 (GQRT…KIWN), 428 to 458 (FECG…QLFD), 471 to 501 (AHDA…KFWD), 571 to 601 (GHKL…KIWG), 613 to 643 (AHQD…KYWD), and 655 to 685 (AHQS…RIWE). A disordered region spans residues 715–739 (EGNGDDAFKADASGEGVEDEASGVH).

Belongs to the WD repeat WDR3/UTP12 family. As to quaternary structure, interacts with snoRNA U3. Interacts with MPP10. Component of the ribosomal small subunit (SSU) processome composed of at least 40 protein subunits and snoRNA U3.

The protein localises to the nucleus. It is found in the nucleolus. Its function is as follows. Involved in nucleolar processing of pre-18S ribosomal RNA. This chain is U3 small nucleolar RNA-associated protein 12 (DIP2), found in Saccharomyces cerevisiae (strain ATCC 204508 / S288c) (Baker's yeast).